A 205-amino-acid chain; its full sequence is Ribosomal RNA small subunit methyltransferase G (205 aa).

S-adenosyl-L-methionine contacts are provided by residues G66, F71, 119–120 (IE), and R135.

It belongs to the methyltransferase superfamily. RNA methyltransferase RsmG family.

It is found in the cytoplasm. The enzyme catalyses guanosine(527) in 16S rRNA + S-adenosyl-L-methionine = N(7)-methylguanosine(527) in 16S rRNA + S-adenosyl-L-homocysteine. Specifically methylates the N7 position of guanine in position 527 of 16S rRNA. The polypeptide is Ribosomal RNA small subunit methyltransferase G (Rhizobium etli (strain ATCC 51251 / DSM 11541 / JCM 21823 / NBRC 15573 / CFN 42)).